The sequence spans 331 residues: ATP-dependent 6-phosphofructokinase (331 aa).

Position 12 (G12) interacts with ATP. Residues 22–26 and 55–60 each bind ADP; these read RGVVR and RYSVSD. Residues 73–74 and 103–106 contribute to the ATP site; these read RF and GDGS. A Mg(2+)-binding site is contributed by D104. 127–129 is a substrate binding site; sequence TID. D129 (proton acceptor) is an active-site residue. R156 provides a ligand contact to ADP. Residues R164 and 171–173 contribute to the substrate site; that span reads MGR. Residues 187 to 189, K213, and 215 to 217 each bind ADP; these read GCE and KKH. Residues E224, R245, and 251 to 254 each bind substrate; that span reads HIQR.

This sequence belongs to the phosphofructokinase type A (PFKA) family. ATP-dependent PFK group I subfamily. Prokaryotic clade 'B1' sub-subfamily. As to quaternary structure, homotetramer. Requires Mg(2+) as cofactor.

It is found in the cytoplasm. It carries out the reaction beta-D-fructose 6-phosphate + ATP = beta-D-fructose 1,6-bisphosphate + ADP + H(+). It participates in carbohydrate degradation; glycolysis; D-glyceraldehyde 3-phosphate and glycerone phosphate from D-glucose: step 3/4. With respect to regulation, allosterically activated by ADP and other diphosphonucleosides, and allosterically inhibited by phosphoenolpyruvate. Functionally, catalyzes the phosphorylation of D-fructose 6-phosphate to fructose 1,6-bisphosphate by ATP, the first committing step of glycolysis. In Yersinia enterocolitica serotype O:8 / biotype 1B (strain NCTC 13174 / 8081), this protein is ATP-dependent 6-phosphofructokinase.